The sequence spans 2434 residues: MGFLHQLQLLLWKNVTLKRRSPWVLAFEIFIPLVLFFILLGLRQKKPTISVKEAFYTAAPLTSAGILPVMQSLCPDGQRDEFGFLQYANSTVTQLLERLNRVVEESNLFDPERPSLGSELEALHQRLEALSSGPGTWESHSARPAVSSFSLDSVARDKRELWRFLMQNLSLPNSTAQALLAARVDPSEVYRLLFGPLPDLDGKLGFLRKQEPWSHLGSNPLFQMEELLLAPALLEQLTCAPGSGELGRILTMPEGHQVDLQGYRDAVCSGQATARAQHFSDLATELRNQLDIAKIAQQLGFNVPNGSDPQPQAPSPQSLQALLGDLLDVQKVLQDVDVLSALALLLPQGACAGRAPAPQAGSPSGPANSTGVGANTGPNTTVEEGTQSPVTPASPDTLQGQCSAFVQLWAGLQPILCGNNRTIEPEALRRGNMSSLGFTSKEQRNLGLLVHLMTSNPKILYAPAGSEADHVILKANETFAFVGNVTHYAQVWLNISAEIRSFLEQGRLQQHLHWLQQYVADLRLHPEAMNLSLDELPPALRLDYFSLPNGTALLQQLDTIDNAACGWIQFMSKVSVDIFKGFPDEESIVNYTLNQAYQDNVTVFASVIFQTRKDGSLPPHVHYKIRQNSSFTEKTNEIRRAYWRPGPNTGGRFYFLYGFVWIQDMIERAIINTFVGHDVVEPGNYVQMFPYPCYTRDDFLFVIEHMMPLCMVISWVYSVAMTIQHIVAEKEHRLKEVMKTMGLNNAVHWVAWFITGFVQLSISVTALTAILKYGQVLMHSHVLIIWLFLAVYAVATIMFCFLVSVLYSKAKLASACGGIIYFLSYVPYMYVAIREEVAHDKITAFEKCIASLMSTTAFGLGSKYFALYEVAGVGIQWHTFSQSPVEGDDFNLLLAVTMLMVDTVVYGVLTWYIEAVHPGMYGLPRPWYFPLQKSYWLGSGRTETWEWSWPWAHAPRLSVMEEDQACAMESRHFEETRGMEEEPTHLPLVVCVDKLTKVYKNDKKLALNKLSLNLYENQVVSFLGHNGAGKTTTMSILTGLFPPTSGSATIYGHDIRTEMDEIRKNLGMCPQHNVLFDQLTVEEHLWFYSRLKSMAQEEIRKEMDKMIEDLELSNKRHSLVQTLSGGMKRKLSVAIAFVGGSRAIILDEPTAGVDPYARRAIWDLILKYKPGRTILLSTHHMDEADLLGDRIAIISHGKLKCCGSPLFLKGAYGDGYRLTLVKRPAEPGTSQEPGMASSPSGRPQLSNCSEMQVSQFIRKHVASSLLVSDTSTELSYILPSEAVKKGAFERLFQQLEHSLDALHLSSFGLMDTTLEEVFLKVSEEDQSLENSEADVKESRKDALPGAEGLTAVESQAGNLARCSELAQSQASLQSASSVGSARGDEGAGYTDGYGDYRPLFDNLQDPDSVSLQEAEMEALARVGQGSRKLEGWWLKMRQFHGLLVKRFHCARRNSKALCSQILLPAFFVCVAMTVALSVPEIGDLPPLVLSPSQYHNYTQPRGNFIPYANEERREYRLRLSPDASPQQLVSTFRLPSGVGATCVLKSPANGSLGPMLNLSSGESRLLAARFFDSMCLESFTQGLPLSNFVPPPPSPAPSDSPLSPDEDSLLAWNTSLPPTAGPETWTWAPSLPRLVHEPVRCTCSAQGTGFSCPSSVGGHPPQMRVVTGDILTDITGHNVSEYLLFTSDRFRLHRYGAITFGNIQKSIPAPIGTRTPLMVRKIAVRRVAQVLYNNKGYHSMPTYLNSLNNAILRANLPKSKGNPAAYGITVTNHPMNKTSASLSLDYLLQGTDVVIAIFIIVAMSFVPASFVVFLVAEKSTKAKHLQFVSGCNPVIYWLANYVWDMLNYLVPATCCIIILFVFDLPAYTSPTNFPAVLSLFLLYGWSITPIMYPASFWFEVPSSAYVFLIVINLFIGITATVATFLLQLFEHDKDLKVVNSYLKSCFLIFPNYNLGHGLMEIAYNEYINEYYAKIGQFDKMKSPFEWDIVTRGLVAMTVEGFVGFFLTIMCQYNFLRQPQRLPVSTKPVEDDVDVASERQRVLRGDADNDMVKIENLTKVYKSRKIGRILAVDRLCLGVRPGECFGLLGVNGAGKTSTFKMLTGDESTTGGEAFVNGHSVLKDLLQVQQSLGYCPQFDALFDELTAREHLQLYTRLRGIPWKDEAQVVRWALEKLELTKCADKPAGSYSGGNKRKLSTAIALIGYPAFIFLDEPTTGMDPKARRFLWNLILDLIKTGRSVVLTSHSMEECEAVCTRLAIMVNGRLRCLGSIQHLKNRFGDGYMITVRTKSSQNVKDVVRFFNRNFPEAMLKERHHTKVQYQLKSEHISLAQVFSKMEHVVGVLGIEDYSVSQTTLDNVFVNFAKKQSDNVEQQEAEPSTLPSPLGLLSLLRPRPAPTELRALVADEPEDLDTEDEGLISFEEERAQLSFNTDTLC.

N-linked (GlcNAc...) asparagine glycosylation occurs at N14. 2 helical membrane passes run P22–L42 and A54–C74. N89, N168, and N173 each carry an N-linked (GlcNAc...) asparagine glycan. Residue Q271 is modified to N5-methylglutamine. N-linked (GlcNAc...) asparagine glycans are attached at residues N305, N368, N379, N420, N432, N476, N484, N494, N530, N549, N590, N600, and N628. Residues R354–S369 are compositionally biased toward low complexity. A disordered region spans residues R354–D396. The span at T370–D396 shows a compositional bias: polar residues. Transmembrane regions (helical) follow at residues F699–V719, V750–I770, V782–L802, A813–I833, A857–W877, and L893–I913. In terms of domain architecture, ABC transporter 1 spans V990–V1221. G1024–T1031 is a binding site for ATP. Residues A1225–S1246 are disordered. The segment covering G1228–S1246 has biased composition (polar residues). The residue at position 1238 (S1238) is a Phosphoserine. N1247 carries N-linked (GlcNAc...) asparagine glycosylation. Residues S1327 and S1331 each carry the phosphoserine modification. Residues I1461–I1481 traverse the membrane as a helical segment. N1496, N1549, and N1557 each carry an N-linked (GlcNAc...) asparagine glycan. The segment at N1587–E1606 is disordered. Over residues V1589–S1598 the composition is skewed to pro residues. 3 N-linked (GlcNAc...) asparagine glycosylation sites follow: N1613, N1678, and N1776. The next 5 helical transmembrane spans lie at V1793–F1813, V1842–F1862, F1873–P1893, V1906–L1926, and G1992–Y2012. Positions V2051 to R2286 constitute an ABC transporter 2 domain. N-linked (GlcNAc...) asparagine glycosylation occurs at N2055. G2088–T2095 is a binding site for ATP. Phosphothreonine is present on T2411.

It belongs to the ABC transporter superfamily. ABCA family. Post-translationally, N-glycosylated. Methylated at Gln-271 by N6AMT1. Expressed at high levels in brain, at moderate levels in heart, kidney and lung, and at low levels in skeletal muscle, stomach, spleen, colon and pancreas. Not detected in the liver or small intestine. In brain, highly expressed in white matter and detected in oligodendrocytes. Expressed in cerebellum as well as the anterior commissure. Expressed mainly in the white matter but is also scattered in gray matter throughout the whole brain. Expressed in myelinating cells of both ventral and dorsal restricted regions in newborn spinal cord. Expressed in non-myelin-forming as well as in myelin-forming Schwann cells in the sciatic nerve.

The protein localises to the endosome membrane. It localises to the lysosome membrane. Probable transporter, its natural substrate has not been found yet. May have a role in macrophage lipid metabolism and neural development. May play a role in myelination, perhaps as a transporter for certain kinds of myelin chemical components. May play an important role in gamma-secretase processing of APP and thus in amyloid-beta peptide generation. Regulates esterification of plasma membrane cholesterol by modulation of sphingolipid metabolism. Its function is as follows. Probable lipid transporter that modulates cholesterol sequestration in the late endosome/lysosome by regulating the intracellular sphingolipid metabolism, in turn participates in cholesterol homeostasis. May alter the transbilayer distribution of ceramide in the intraluminal membrane lipid bilayer, favoring its retention in the outer leaflet that results in increased acid ceramidase activity in the late endosome/lysosome, facilitating ceramide deacylation to sphingosine leading to the sequestration of free cholesterol in lysosomes. In addition regulates amyloid-beta production either by activating a signaling pathway that regulates amyloid precursor protein transcription through the modulation of sphingolipid metabolism or through its role in gamma-secretase processing of APP. May play a role in myelin formation. The polypeptide is ATP-binding cassette sub-family A member 2 (Rattus norvegicus (Rat)).